The sequence spans 645 residues: Translation factor GUF1 homolog, mitochondrial (645 aa).

The region spanning Glu-40–Thr-215 is the tr-type G domain. GTP-binding positions include Ala-49–Ser-56, Asp-108–His-112, and Asn-162–Asp-165.

The protein belongs to the TRAFAC class translation factor GTPase superfamily. Classic translation factor GTPase family. LepA subfamily.

It is found in the mitochondrion inner membrane. It catalyses the reaction GTP + H2O = GDP + phosphate + H(+). In terms of biological role, promotes mitochondrial protein synthesis. May act as a fidelity factor of the translation reaction, by catalyzing a one-codon backward translocation of tRNAs on improperly translocated ribosomes. Binds to mitochondrial ribosomes in a GTP-dependent manner. In Caenorhabditis briggsae, this protein is Translation factor GUF1 homolog, mitochondrial.